A 944-amino-acid polypeptide reads, in one-letter code: Calcium-transporting ATPase type 2C member 2 (944 aa).

The Cytoplasmic portion of the chain corresponds to 1-104 (MGRRLKFLQK…DNAEPVWKKY (104 aa)). The interval 69-93 (VDLDSGLSEFAVAQRRLVHGWNEFV) is interaction with ORAI1. A helical membrane pass occupies residues 105–125 (LDQFRNPLILLLLGSSVVSVL). The Extracellular portion of the chain corresponds to 126–127 (TK). The helical transmembrane segment at 128–148 (EYEDAVSIALAVLIVVTVGFI) threads the bilayer. Residues 149–229 (QEYRSEKSLE…EVEPCGKTDS (81 aa)) lie on the Cytoplasmic side of the membrane. Residues 230 to 250 (PLADGGDLSTLSNVVFMGTLV) form a helical membrane-spanning segment. The Extracellular segment spans residues 251 to 291 (QCGKGQGVVIGTGEQSQFGEVFKMMRAEETPKTPLQKSMDK). Thr-262 carries the phosphothreonine modification. Ser-266 is modified (phosphoserine). A helical membrane pass occupies residues 292–312 (LGKQLTIFSFGIIGLLMLVGW). At 313–329 (VQGKPFLSMFTVGVSLA) the chain is on the cytoplasmic side. 4 residues coordinate Ca(2+): Val-330, Ala-331, Ile-333, and Glu-335. Residues 330 to 350 (VAAIPEGLPIVVMVTLVLGVL) form a helical membrane-spanning segment. Residues 351 to 748 (RMAKKRVIVK…IAALSLITLS (398 aa)) are Extracellular-facing. Residue Asp-377 is the 4-aspartylphosphate intermediate of the active site. Asp-672 and Asp-676 together coordinate Mg(2+). The helical transmembrane segment at 749-769 (TVCNLPSPLNAMQILWVNIIM) threads the bilayer. The Ca(2+) site is built by Asn-766 and Asp-770. Residues 770-802 (DGPPAQSLGVEPVDRDALRRPPRSVGDTILNRA) are Cytoplasmic-facing. A helical transmembrane segment spans residues 803–823 (LILRVLMSAAVIIGGTLFIFW). Over 824–835 (REIPANGTSTPR) the chain is Extracellular. Residues 836–853 (TTTMAFTCFVFFDLFNAL) traverse the membrane as a helical segment. Topologically, residues 854–872 (SCRSQTKLIFEIGFFRNRM) are cytoplasmic. Residues 873–893 (FLYSVLGSLLGQLAVIYAPPL) form a helical membrane-spanning segment. Over 894–903 (QKVFQTENLS) the chain is Extracellular. The helical transmembrane segment at 904–924 (ALDLLLLTGLASSVFILSELL) threads the bilayer. Topologically, residues 925 to 944 (KLWEKFLSRARPTQMLPEAV) are cytoplasmic.

The protein belongs to the cation transport ATPase (P-type) (TC 3.A.3) family. Type IIA subfamily. Interacts (via N-terminus) with ORAI1 (via N- and C-termini); this interaction regulates Ca(2+) influx at the plasma membrane. Expressed in hippocampal neurons (at protein level). Expressed in lactating mammary epithelium (at protein level).

The protein localises to the golgi apparatus. The protein resides in the trans-Golgi network membrane. It is found in the cell membrane. Its subcellular location is the basolateral cell membrane. It carries out the reaction Ca(2+)(in) + ATP + H2O = Ca(2+)(out) + ADP + phosphate + H(+). The catalysed reaction is Mn(2+)(in) + ATP + H2O = Mn(2+)(out) + ADP + phosphate + H(+). ATP-driven pump that supplies the Golgi apparatus with Ca(2+) and Mn(2+) ions, both essential cofactors for processing and trafficking of newly synthesized proteins in the secretory pathway. Within a catalytic cycle, acquires Ca(2+) or Mn(2+) ions on the cytoplasmic side of the membrane and delivers them to the lumenal side. The transfer of ions across the membrane is coupled to ATP hydrolysis and is associated with a transient phosphorylation that shifts the pump conformation from inward-facing to outward-facing state. Induces Ca(2+) influx independently of its ATP-driven pump function. At the basolateral membrane of mammary epithelial cells, interacts with Ca(2+) channel ORAI1 and mediates Ca(2+) entry independently of the Ca(2+) content of endoplasmic reticulum or Golgi stores. May facilitate transepithelial transport of large quantities of Ca(2+) for milk secretion via activation of Ca(2+) influx channels at the plasma membrane and active Ca(2+) transport at the Golgi apparatus. This chain is Calcium-transporting ATPase type 2C member 2, found in Mus musculus (Mouse).